Reading from the N-terminus, the 406-residue chain is Imidazolonepropionase (406 aa).

The Fe(3+) site is built by His-74 and His-76. The Zn(2+) site is built by His-74 and His-76. Residues Arg-83, Tyr-146, and His-179 each contribute to the 4-imidazolone-5-propanoate site. Residue Tyr-146 coordinates N-formimidoyl-L-glutamate. His-240 provides a ligand contact to Fe(3+). Residue His-240 participates in Zn(2+) binding. Glu-243 lines the 4-imidazolone-5-propanoate pocket. Asp-314 provides a ligand contact to Fe(3+). Asp-314 contributes to the Zn(2+) binding site. N-formimidoyl-L-glutamate is bound by residues Asn-316 and Gly-318. Ser-319 is a 4-imidazolone-5-propanoate binding site.

It belongs to the metallo-dependent hydrolases superfamily. HutI family. It depends on Zn(2+) as a cofactor. Fe(3+) is required as a cofactor.

It is found in the cytoplasm. The catalysed reaction is 4-imidazolone-5-propanoate + H2O = N-formimidoyl-L-glutamate. It functions in the pathway amino-acid degradation; L-histidine degradation into L-glutamate; N-formimidoyl-L-glutamate from L-histidine: step 3/3. Its function is as follows. Catalyzes the hydrolytic cleavage of the carbon-nitrogen bond in imidazolone-5-propanoate to yield N-formimidoyl-L-glutamate. It is the third step in the universal histidine degradation pathway. In Kosmotoga olearia (strain ATCC BAA-1733 / DSM 21960 / TBF 19.5.1), this protein is Imidazolonepropionase.